The chain runs to 2601 residues: Centrosomal protein of 295 kDa (2601 aa).

The segment at 1-560 (MKRKVVNTHK…KKTQPTGVGI (560 aa)) is necessary for centriole targeting and microtubule association. Phosphoserine is present on Ser14. Coiled coils occupy residues 207–273 (KRPD…EDLA) and 500–552 (AARI…KRKK). A phosphoserine mark is found at Ser654 and Ser938. A disordered region spans residues 1008 to 1029 (PSADTKSGKIQEQHSSKSEKGL). Over residues 1013–1027 (KSGKIQEQHSSKSEK) the composition is skewed to basic and acidic residues. Coiled coils occupy residues 1053 to 1082 (LHDS…VELL) and 1498 to 1544 (IQSH…VSSE). Positions 1558–1580 (ADSERTQKSFPTKSNDTLPSSHR) are disordered. Positions 1565–1577 (KSFPTKSNDTLPS) are enriched in polar residues. Ser1637 is subject to Phosphoserine. The stretch at 1728 to 1758 (QEKLLVQRQTALQQQIQKHEETLKDFFKDSQ) forms a coiled coil. Composition is skewed to basic and acidic residues over residues 1795-1827 (RHAD…DLGR), 1985-2003 (FSEH…KEEE), and 2100-2112 (DNRD…DSSS). Disordered stretches follow at residues 1795–1834 (RHAD…KPPV), 1979–2004 (LTDP…EEET), and 2085–2117 (HPDF…SHCA). Thr2473 is subject to Phosphothreonine. Positions 2478–2601 (SLQEAFIKRK…LEKLRAKNTC (124 aa)) are ALMS motif. The stretch at 2556–2581 (RLYNQLAEVKQQKEEKTKQEAYAQNR) forms a coiled coil.

As to quaternary structure, interacts (via ALMS motif) with microtubules; this interaction is direct.

The protein resides in the cytoplasm. It localises to the cytoskeleton. Its subcellular location is the microtubule organizing center. It is found in the centrosome. The protein localises to the centriole. The protein resides in the spindle. Functionally, centriole-enriched microtubule-binding protein involved in centriole biogenesis. Essential for the generation of the distal portion of new-born centrioles in a CPAP- and CEP120-mediated elongation dependent manner during the cell cycle S/G2 phase after formation of the initiating cartwheel structure. Required for the recruitment of centriolar proteins, such as POC1B, POC5 and CEP135, into the distal portion of centrioles. Also required for centriole-to-centrosome conversion during mitotic progression, but is dispensable for cartwheel removal or centriole disengagement. Binds to and stabilizes centriolar microtubule. May be involved in ciliogenesis. The polypeptide is Centrosomal protein of 295 kDa (Homo sapiens (Human)).